The primary structure comprises 255 residues: 4-diphosphocytidyl-2-C-methyl-D-erythritol kinase (255 aa).

The active site involves lysine 9. 95–105 (PSQAGLGGGSS) contributes to the ATP binding site. Aspartate 137 is a catalytic residue.

It belongs to the GHMP kinase family. IspE subfamily.

The enzyme catalyses 4-CDP-2-C-methyl-D-erythritol + ATP = 4-CDP-2-C-methyl-D-erythritol 2-phosphate + ADP + H(+). It functions in the pathway isoprenoid biosynthesis; isopentenyl diphosphate biosynthesis via DXP pathway; isopentenyl diphosphate from 1-deoxy-D-xylulose 5-phosphate: step 3/6. Its function is as follows. Catalyzes the phosphorylation of the position 2 hydroxy group of 4-diphosphocytidyl-2C-methyl-D-erythritol. The polypeptide is 4-diphosphocytidyl-2-C-methyl-D-erythritol kinase (Sulfurovum sp. (strain NBC37-1)).